The sequence spans 260 residues: Ribonuclease HII (260 aa).

The 188-residue stretch at 73–260 folds into the RNase H type-2 domain; the sequence is LHIAGIDEAG…APVQQQLDIV (188 aa). A divalent metal cation is bound by residues aspartate 79, glutamate 80, and aspartate 171.

The protein belongs to the RNase HII family. Requires Mn(2+) as cofactor. The cofactor is Mg(2+).

The protein localises to the cytoplasm. It carries out the reaction Endonucleolytic cleavage to 5'-phosphomonoester.. In terms of biological role, endonuclease that specifically degrades the RNA of RNA-DNA hybrids. In Desulfitobacterium hafniense (strain DSM 10664 / DCB-2), this protein is Ribonuclease HII.